A 287-amino-acid polypeptide reads, in one-letter code: Glucose uptake protein GlcU (287 aa).

8 helical membrane-spanning segments follow: residues 4–26 (LLAL…LGGG), 38–60 (ALIV…IFIV), 110–132 (WSTP…GIIL), 153–175 (ILIL…LFNV), 180–197 (ALLP…VLTY), 210–227 (ILPG…FISQ), 232–254 (VATS…IFIL), and 261–283 (RQLI…LGIA).

The protein belongs to the GRP transporter (TC 2.A.7.5) family.

The protein localises to the cell membrane. Functionally, involved in the uptake of glucose. This is Glucose uptake protein GlcU (glcU) from Bacillus subtilis (strain 168).